The chain runs to 192 residues: uncharacterized protein (192 aa).

Disordered stretches follow at residues 1 to 37 (MASS…PAFP) and 146 to 192 (ARGP…EQNK). Composition is skewed to pro residues over residues 8-19 (TPSPAGLPPPSV) and 159-180 (APPP…PGWP).

This is an uncharacterized protein from Homo sapiens (Human).